A 370-amino-acid polypeptide reads, in one-letter code: Flagellar P-ring protein (370 aa).

Positions 1 to 27 (MPARPIPVPLLALALAAALAVPSPAAA) are cleaved as a signal peptide.

Belongs to the FlgI family. In terms of assembly, the basal body constitutes a major portion of the flagellar organelle and consists of four rings (L,P,S, and M) mounted on a central rod.

The protein localises to the periplasm. It localises to the bacterial flagellum basal body. In terms of biological role, assembles around the rod to form the L-ring and probably protects the motor/basal body from shearing forces during rotation. This is Flagellar P-ring protein from Anaeromyxobacter sp. (strain K).